The sequence spans 152 residues: MASLEDGIYRLRAVTTHNPDPGVGGEYATVEGARRPVKAEPNTPPFFEQQIWQVTRNADGQYTIKYQGLNTPFEYGFSYDELEPNAPVIAGDPKEYILQLVPSTADVYIIRAPIQRIGVDVEVGVQGNTLVYKFFPVDGSGGDRPAWRFTRE.

It belongs to the protease inhibitor I48 family. As to quaternary structure, homodimer. Expressed in all analyzed tissues, but expression was higher in the pileus and in the lower part of the stipe.

Its function is as follows. Binds and inhibits cysteine proteinases. Inhibits most strongly papain and cathepsin L, more weakly bromelain and cathepsin B while it is completely ineffective against cathepsin H. In Clitocybe nebularis (Clouded agaric), this protein is Clitocypin-2 (clt2).